A 286-amino-acid chain; its full sequence is ATP synthase gamma chain (286 aa).

This sequence belongs to the ATPase gamma chain family. F-type ATPases have 2 components, CF(1) - the catalytic core - and CF(0) - the membrane proton channel. CF(1) has five subunits: alpha(3), beta(3), gamma(1), delta(1), epsilon(1). CF(0) has three main subunits: a, b and c.

The protein localises to the cell membrane. Its function is as follows. Produces ATP from ADP in the presence of a proton gradient across the membrane. The gamma chain is believed to be important in regulating ATPase activity and the flow of protons through the CF(0) complex. The chain is ATP synthase gamma chain from Malacoplasma penetrans (strain HF-2) (Mycoplasma penetrans).